We begin with the raw amino-acid sequence, 239 residues long: Protein canopy homolog 4 (239 aa).

The first 20 residues, 1–20, serve as a signal peptide directing secretion; the sequence is MGPVRLGTLLFILTVYGAWA. 3 cysteine pairs are disulfide-bonded: C37–C195, C40–C183, and C93–C155. The interval 199–239 is disordered; the sequence is TWTGKEKITDGQEKTEEEEQDQEEEEMTNTPVHSQHDPEDL. Over residues 201–212 the composition is skewed to basic and acidic residues; that stretch reads TGKEKITDGQEK. Acidic residues predominate over residues 213–225; that stretch reads TEEEEQDQEEEEM.

This sequence belongs to the canopy family. As to quaternary structure, interacts with TLR4.

Its subcellular location is the secreted. Plays a role in the regulation of the cell surface expression of TLR4. The polypeptide is Protein canopy homolog 4 (CNPY4) (Bos taurus (Bovine)).